The primary structure comprises 37 residues: Putative preoptic regulatory factor 1 (37 aa).

Propeptides lie at residues 1–7 and 18–37; these read MPYSLQP and FPLC…PPDL.

The protein belongs to the GnRH family. As to expression, preoptic area and testis.

Its subcellular location is the secreted. Functionally, precursor for a gonadotropin regulatory hormone (GNRH) related decapeptide. The protein is Putative preoptic regulatory factor 1 (Porf1) of Rattus norvegicus (Rat).